We begin with the raw amino-acid sequence, 210 residues long: Fibrillarin-like rRNA/tRNA 2'-O-methyltransferase (210 aa).

Residues threonine 70 to threonine 71, glutamate 88 to tyrosine 89, aspartate 113 to alanine 114, and aspartate 133 to glutamine 136 each bind S-adenosyl-L-methionine.

This sequence belongs to the methyltransferase superfamily. Fibrillarin family. Interacts with nop5. Component of box C/D small ribonucleoprotein (sRNP) particles that contain rpl7ae, FlpA and nop5, plus a guide RNA.

In terms of biological role, involved in pre-rRNA and tRNA processing. Utilizes the methyl donor S-adenosyl-L-methionine to catalyze the site-specific 2'-hydroxyl methylation of ribose moieties in rRNA and tRNA. Site specificity is provided by a guide RNA that base pairs with the substrate. Methylation occurs at a characteristic distance from the sequence involved in base pairing with the guide RNA. The protein is Fibrillarin-like rRNA/tRNA 2'-O-methyltransferase of Archaeoglobus fulgidus (strain ATCC 49558 / DSM 4304 / JCM 9628 / NBRC 100126 / VC-16).